The primary structure comprises 331 residues: 6-phosphogluconolactonase (331 aa).

The protein belongs to the cycloisomerase 2 family.

The catalysed reaction is 6-phospho-D-glucono-1,5-lactone + H2O = 6-phospho-D-gluconate + H(+). Its pathway is carbohydrate degradation; pentose phosphate pathway; D-ribulose 5-phosphate from D-glucose 6-phosphate (oxidative stage): step 2/3. Functionally, catalyzes the hydrolysis of 6-phosphogluconolactone to 6-phosphogluconate. This is 6-phosphogluconolactonase from Salmonella choleraesuis (strain SC-B67).